A 151-amino-acid polypeptide reads, in one-letter code: MPVWVDADACPKVIKEVLFRAAERTETPVILVANQPLRVPPSKFIRARQVPAGFDVADNEIVRCCEPGDLVVTADIPLAAEVIAKGAVALNPRGERYSEATIRERLTMRDFMDTLRASGIQTGGPDALSQRDRQQFAAELDKWLSGRKRQA.

The protein belongs to the UPF0178 family.

This is UPF0178 protein ESA_02916 from Cronobacter sakazakii (strain ATCC BAA-894) (Enterobacter sakazakii).